A 763-amino-acid chain; its full sequence is Pentatricopeptide repeat-containing protein At4g32430, mitochondrial (763 aa).

The N-terminal 38 residues, 1–38, are a transit peptide targeting the mitochondrion; the sequence is MTLLNYLHCNRSKSFLFQRFYSPYRIAHKLFDGSSQRN. 17 PPR repeats span residues 77-109, 110-140, 141-172, 173-207, 208-238, 239-274, 275-309, 310-344, 350-370, 371-405, 406-436, 437-471, 472-507, 508-538, 539-573, 574-604, and 610-640; these read DEVT…GFTS, FVCV…LVDP, DVVS…GVVF, DAFT…GLES, DLVV…MSFK, DMIS…GVEL, DHVS…GYES, LLEV…NVVS, SSNK…GVYP, NEVT…GFVS, EPSV…ITFR, EIIS…TMPN, EYTF…GLNS, CPVV…MSQK, NQFV…NVAP, DLVT…MIEV, and SHEH…VPGG. Positions 645–720 are type E motif; the sequence is MLQSMLGSCR…EAGFSWIDVG (76 aa). Positions 724–756 are type E(+) motif; it reads GSLTMQGFSSGDKSHPKSDEIYRMVEIIGLEMN.

It belongs to the PPR family. PCMP-E subfamily.

The protein resides in the mitochondrion. In Arabidopsis thaliana (Mouse-ear cress), this protein is Pentatricopeptide repeat-containing protein At4g32430, mitochondrial (PCMP-E40).